A 629-amino-acid chain; its full sequence is Dolichyl-diphosphooligosaccharide--protein glycosyltransferase subunit 2 (629 aa).

Residues 1–22 form the signal peptide; it reads MAPPGSRTVLLLALTIIARTQA. At 23 to 541 the chain is on the lumenal side; sequence LKPTHYLTKH…RDPEKRPPTV (519 aa). A glycan (N-linked (GlcNAc...) asparagine) is linked at Asn106. Residue Lys154 forms a Glycyl lysine isopeptide (Lys-Gly) (interchain with G-Cter in ubiquitin) linkage. The chain crosses the membrane as a helical span at residues 542–562; it reads VSNTFTGLILSPLLLLFALWI. Over 563–570 the chain is Cytoplasmic; it reads RIGAKISN. Residues 571 to 591 form a helical membrane-spanning segment; the sequence is FTFGLTIIFHLGHAMLAMYVY. Over 592–594 the chain is Lumenal; sequence WTQ. A helical membrane pass occupies residues 595 to 615; sequence LNMFQTLKYLAILGSVTFLAG. The Cytoplasmic segment spans residues 616 to 629; the sequence is NRMLAQQAIKRTAH.

The protein belongs to the SWP1 family. Component of the oligosaccharyltransferase (OST) complex. OST exists in two different complex forms which contain common core subunits RPN1, RPN2, OST48, OST4, DAD1 and TMEM258, either STT3A or STT3B as catalytic subunits, and form-specific accessory subunits. STT3A complex assembly occurs through the formation of 3 subcomplexes. Subcomplex 1 contains RPN1 and TMEM258, subcomplex 2 contains the STT3A-specific subunits STT3A, DC2/OSTC, and KCP2 as well as the core subunit OST4, and subcomplex 3 contains RPN2, DAD1, and OST48. The STT3A complex can form stable complexes with the Sec61 complex or with both the Sec61 and TRAP complexes. Interacts with DDI2. Interacts with TMEM35A/NACHO.

The protein resides in the endoplasmic reticulum. It is found in the endoplasmic reticulum membrane. It participates in protein modification; protein glycosylation. In terms of biological role, subunit of the oligosaccharyl transferase (OST) complex that catalyzes the initial transfer of a defined glycan (Glc(3)Man(9)GlcNAc(2) in eukaryotes) from the lipid carrier dolichol-pyrophosphate to an asparagine residue within an Asn-X-Ser/Thr consensus motif in nascent polypeptide chains, the first step in protein N-glycosylation. N-glycosylation occurs cotranslationally and the complex associates with the Sec61 complex at the channel-forming translocon complex that mediates protein translocation across the endoplasmic reticulum (ER). All subunits are required for a maximal enzyme activity. The polypeptide is Dolichyl-diphosphooligosaccharide--protein glycosyltransferase subunit 2 (Sus scrofa (Pig)).